The primary structure comprises 472 residues: 3-isopropylmalate dehydratase large subunit (472 aa).

Residues C347, C407, and C410 each coordinate [4Fe-4S] cluster.

This sequence belongs to the aconitase/IPM isomerase family. LeuC type 1 subfamily. In terms of assembly, heterodimer of LeuC and LeuD. Requires [4Fe-4S] cluster as cofactor.

It catalyses the reaction (2R,3S)-3-isopropylmalate = (2S)-2-isopropylmalate. It functions in the pathway amino-acid biosynthesis; L-leucine biosynthesis; L-leucine from 3-methyl-2-oxobutanoate: step 2/4. Catalyzes the isomerization between 2-isopropylmalate and 3-isopropylmalate, via the formation of 2-isopropylmaleate. The protein is 3-isopropylmalate dehydratase large subunit of Synechococcus sp. (strain CC9902).